The chain runs to 262 residues: Adenosylcobinamide-GDP ribazoletransferase (262 aa).

4 helical membrane passes run 43 to 63 (PLAG…LGAI), 121 to 141 (VALI…LPLL), 145 to 165 (GGGV…VWHW), and 195 to 215 (GVIL…AVLL).

Belongs to the CobS family. Requires Mg(2+) as cofactor.

The protein localises to the cell inner membrane. The catalysed reaction is alpha-ribazole + adenosylcob(III)inamide-GDP = adenosylcob(III)alamin + GMP + H(+). It catalyses the reaction alpha-ribazole 5'-phosphate + adenosylcob(III)inamide-GDP = adenosylcob(III)alamin 5'-phosphate + GMP + H(+). Its pathway is cofactor biosynthesis; adenosylcobalamin biosynthesis; adenosylcobalamin from cob(II)yrinate a,c-diamide: step 7/7. Its function is as follows. Joins adenosylcobinamide-GDP and alpha-ribazole to generate adenosylcobalamin (Ado-cobalamin). Also synthesizes adenosylcobalamin 5'-phosphate from adenosylcobinamide-GDP and alpha-ribazole 5'-phosphate. This chain is Adenosylcobinamide-GDP ribazoletransferase, found in Sinorhizobium medicae (strain WSM419) (Ensifer medicae).